We begin with the raw amino-acid sequence, 355 residues long: Peptide chain release factor 1 (355 aa).

Glutamine 231 bears the N5-methylglutamine mark.

This sequence belongs to the prokaryotic/mitochondrial release factor family. Methylated by PrmC. Methylation increases the termination efficiency of RF1.

It localises to the cytoplasm. Functionally, peptide chain release factor 1 directs the termination of translation in response to the peptide chain termination codons UAG and UAA. This chain is Peptide chain release factor 1, found in Sulfurovum sp. (strain NBC37-1).